A 337-amino-acid chain; its full sequence is Phenylalanine--tRNA ligase alpha subunit (337 aa).

E252 provides a ligand contact to Mg(2+).

The protein belongs to the class-II aminoacyl-tRNA synthetase family. Phe-tRNA synthetase alpha subunit type 1 subfamily. As to quaternary structure, tetramer of two alpha and two beta subunits. Requires Mg(2+) as cofactor.

The protein resides in the cytoplasm. It catalyses the reaction tRNA(Phe) + L-phenylalanine + ATP = L-phenylalanyl-tRNA(Phe) + AMP + diphosphate + H(+). This Cellvibrio japonicus (strain Ueda107) (Pseudomonas fluorescens subsp. cellulosa) protein is Phenylalanine--tRNA ligase alpha subunit.